We begin with the raw amino-acid sequence, 847 residues long: Matrin-3 (847 aa).

The residue at position 2 (serine 2) is an N-acetylserine. At lysine 3 the chain carries N6-acetyllysine; alternate. Residue lysine 3 forms a Glycyl lysine isopeptide (Lys-Gly) (interchain with G-Cter in SUMO2); alternate linkage. Residues serine 4, serine 9, serine 11, serine 14, serine 22, serine 41, serine 118, and serine 126 each carry the phosphoserine modification. Glycyl lysine isopeptide (Lys-Gly) (interchain with G-Cter in SUMO2) cross-links involve residues lysine 132 and lysine 146. Disordered stretches follow at residues 146 to 174 and 187 to 214; these read KRRR…YRVP and DSFD…SGYY. At threonine 150 the chain carries Phosphothreonine. Serine 157 is subject to Phosphoserine. Tyrosine 158 carries the post-translational modification Phosphotyrosine. Over residues 160–174 the composition is skewed to basic and acidic residues; sequence RDGRSATREPPYRVP. Phosphoserine occurs at positions 164, 188, and 195. Positions 201 to 214 are enriched in basic and acidic residues; that stretch reads DYDHGSRSQESGYY. Tyrosine 202 bears the Phosphotyrosine mark. Phosphoserine occurs at positions 206, 208, and 211. Tyrosine 219 carries the phosphotyrosine modification. Serine 234 is subject to Phosphoserine. A Glycyl lysine isopeptide (Lys-Gly) (interchain with G-Cter in SUMO2) cross-link involves residue lysine 245. A Phosphoserine modification is found at serine 264. Lysine 269 participates in a covalent cross-link: Glycyl lysine isopeptide (Lys-Gly) (interchain with G-Cter in SUMO2). Serine 275 carries the phosphoserine modification. Residues 342-394 are disordered; sequence PFMLQQSTNPAPGILGPPPPSFHLGGPAVGPRGNLGAGNGNLQGPRHMQKGRV. The 76-residue stretch at 398–473 folds into the RRM 1 domain; that stretch reads RVVHIMDFQR…KPVRVHLSQK (76 aa). Glycyl lysine isopeptide (Lys-Gly) (interchain with G-Cter in SUMO2) cross-links involve residues lysine 478, lysine 487, and lysine 491. Positions 496–571 constitute an RRM 2 domain; sequence RVIHLSNLPH…RCVKVDLSEK (76 aa). Phosphoserine occurs at positions 509 and 511. Lysine 515 is covalently cross-linked (Glycyl lysine isopeptide (Lys-Gly) (interchain with G-Cter in SUMO2)). Residue lysine 522 is modified to N6-acetyllysine; alternate. A Glycyl lysine isopeptide (Lys-Gly) (interchain with G-Cter in SUMO2); alternate cross-link involves residue lysine 522. Serine 533 bears the Phosphoserine mark. Residues lysine 554 and lysine 555 each participate in a glycyl lysine isopeptide (Lys-Gly) (interchain with G-Cter in SUMO2) cross-link. Lysine 571 is modified (N6-acetyllysine). Residues 588-786 are disordered; sequence KKDKSRKRSY…DEYRIGPYQP (199 aa). Residues serine 596, serine 598, serine 604, and serine 606 each carry the phosphoserine modification. Residues 600–643 are compositionally biased toward basic and acidic residues; sequence DGKESPSDKKSKTDGSQKTESSTEGKEQEEKSGEDGEKDTKDDQ. Residues lysine 617 and lysine 630 each participate in a glycyl lysine isopeptide (Lys-Gly) (interchain with G-Cter in SUMO2) cross-link. The segment covering 653 to 665 has biased composition (acidic residues); that stretch reads ESEDELLVDEEEA. A phosphoserine mark is found at serine 654, serine 671, serine 673, and serine 674. The segment covering 666–676 has biased composition (low complexity); the sequence is AALLESGSSVG. At threonine 679 the chain carries Phosphothreonine. At serine 689 the chain carries Phosphoserine. Over residues 689–704 the composition is skewed to basic and acidic residues; that stretch reads SDGKKEPSDKAVKKDG. The short motif at 710–718 is the Nuclear localization signal element; it reads AKKKLKKVD. Glycyl lysine isopeptide (Lys-Gly) (interchain with G-Cter in SUMO2) cross-links involve residues lysine 719 and lysine 736. Residue threonine 741 is modified to Phosphothreonine. 3 positions are modified to phosphoserine: serine 747, serine 759, and serine 766. Residues 767–780 show a composition bias toward basic and acidic residues; it reads DENKDDYTIPDEYR. Lysine 770 participates in a covalent cross-link: Glycyl lysine isopeptide (Lys-Gly) (interchain with G-Cter in SUMO2). The Matrin-type zinc-finger motif lies at 801-832; that stretch reads FYCKLCSLFYTNEEVAKNTHCSSLPHYQKLKK. Position 836 is an N6-acetyllysine; alternate (lysine 836). Residue lysine 836 forms a Glycyl lysine isopeptide (Lys-Gly) (interchain with G-Cter in SUMO2); alternate linkage.

In terms of assembly, part of a complex consisting of SFPQ, NONO and MATR3. Interacts with AGO1 and AGO2. Part of a complex composed at least of ASH2L, EMSY, HCFC1, HSPA8, CCAR2, MATR3, MKI67, RBBP5, TUBB2A, WDR5 and ZNF335; this complex may have a histone H3-specific methyltransferase activity. Interacts with TARDBP. Part of the HDP-RNP complex composed of at least HEXIM1, PRKDC, XRCC5, XRCC6, paraspeckle proteins (SFPQ, NONO, PSPC1, RBM14, and MATR3) and NEAT1 RNA. Interacts with FUS. Interacts with IGF2BP1; the interaction is enhanced by SEPIN14P20 peptide RBPR. Interacts with IGF2BP2 and IGF2BP3. Interacts with RBPMS.

It is found in the nucleus matrix. Functionally, may play a role in transcription or may interact with other nuclear matrix proteins to form the internal fibrogranular network. In association with the SFPQ-NONO heteromer may play a role in nuclear retention of defective RNAs. Plays a role in the regulation of DNA virus-mediated innate immune response by assembling into the HDP-RNP complex, a complex that serves as a platform for IRF3 phosphorylation and subsequent innate immune response activation through the cGAS-STING pathway. Binds to N6-methyladenosine (m6A)-containing mRNAs and contributes to MYC stability by binding to m6A-containing MYC mRNAs. May bind to specific miRNA hairpins. This is Matrin-3 (MATR3) from Homo sapiens (Human).